The following is a 97-amino-acid chain: Citrate lyase acyl carrier protein (97 aa).

Position 14 is an O-(phosphoribosyl dephospho-coenzyme A)serine (Ser14).

This sequence belongs to the CitD family. As to quaternary structure, oligomer with a subunit composition of (alpha,beta,gamma)6.

Its subcellular location is the cytoplasm. In terms of biological role, covalent carrier of the coenzyme of citrate lyase. The chain is Citrate lyase acyl carrier protein from Enterobacter sp. (strain 638).